The primary structure comprises 158 residues: U-limacoditoxin(8)-Dv66 (158 aa).

An N-terminal signal peptide occupies residues 1–24 (MALRAPWIALCCVLAVLFVVPAAT). Positions 25-32 (RDEERQKR) are excised as a propeptide. Tandem repeats lie at residues 33-78 (GVDF…RQKR) and 79-124 (GVDF…RQKR). The interval 33–158 (GVDFGLQRGF…AQDPHGPGRK (126 aa)) is 3 X 46 AA tandem repeats. P63 is subject to Proline amide. A propeptide spanning residues 64–78 (GRKRRDAYEMERQKR) is cleaved from the precursor. Residues 101–120 (ARAQDPHGPGRKRRDAYEME) form a disordered region. P109 is modified (proline amide). A propeptide spanning residues 110-124 (GRKRRDAYEMERQKR) is cleaved from the precursor. Residues 125–158 (GVDFGLQRGFSGSELAKLKLALARAQDPHGPGRK) form a 3; half-length repeat. P155 is subject to Proline amide.

This sequence belongs to the diuretic hormone class 2 family. Expressed by the venom secretory cell of the spine. The spine is a cuticular structure containing a single large nucleated venom-secreting cell at its base. It is an independent unit capable of producing, storing and injecting venom. On the back of D.vulnerans caterpillars, spines are grouped together by 50 to 100 to form scoli, of which there are eight in D.vulnerans.

The protein localises to the secreted. Functionally, probable toxin. Does not show insecticidal, antimicrobial and antiparasitic activities. Does not induce increase in intracellular calcium in mouse DRG neurons, suggesting that it does not induce pain. The polypeptide is U-limacoditoxin(8)-Dv66 (Doratifera vulnerans (Mottled cup moth)).